Here is a 71-residue protein sequence, read N- to C-terminus: Small ribosomal subunit protein eS17 (71 aa).

Belongs to the eukaryotic ribosomal protein eS17 family.

This Pyrobaculum aerophilum (strain ATCC 51768 / DSM 7523 / JCM 9630 / CIP 104966 / NBRC 100827 / IM2) protein is Small ribosomal subunit protein eS17.